A 129-amino-acid polypeptide reads, in one-letter code: Small ribosomal subunit protein uS8 (129 aa).

The protein belongs to the universal ribosomal protein uS8 family. Part of the 30S ribosomal subunit.

Functionally, one of the primary rRNA binding proteins, it binds directly to 16S rRNA central domain where it helps coordinate assembly of the platform of the 30S subunit. The sequence is that of Small ribosomal subunit protein uS8 from Nanoarchaeum equitans (strain Kin4-M).